The sequence spans 373 residues: DNA replication and repair protein RecF (373 aa).

ATP is bound at residue 30-37 (GPNGQGKT).

Belongs to the RecF family.

The protein localises to the cytoplasm. The RecF protein is involved in DNA metabolism; it is required for DNA replication and normal SOS inducibility. RecF binds preferentially to single-stranded, linear DNA. It also seems to bind ATP. The chain is DNA replication and repair protein RecF from Streptomyces avermitilis (strain ATCC 31267 / DSM 46492 / JCM 5070 / NBRC 14893 / NCIMB 12804 / NRRL 8165 / MA-4680).